The primary structure comprises 344 residues: MMNMLSDRKKLILKAVVENYSQKRQPVGSKMLTYLPYLKFASATIRYDMVQLEKEGFLQKNHTSSGRVPSFKGYVYYLNHLLTRDHDVACMFESIDKVIQKKRFCKGQVIKEALNLLNNLTNYTTMAIGSDIFNNSKITKIDFIPLNSAQAVILIITDKGNVQHQNISLEQTKEISIYDLKDVVQVVNDLLKDKFLSEAAHIIQSDFFKKTIAKYICFQEQLIALFMEAFSSFASENLYFSGVSKMLEKPELNNPEIIKKFMGLLERKELLKIMLNQDSLSFKFSDGLQLTPLKDCMILSIPFDVNPNEKGRIAVVGPSWMKYPKVIPILEYLAVHLSKLNDQE.

Belongs to the HrcA family.

Functionally, negative regulator of class I heat shock genes (grpE-dnaK-dnaJ and groELS operons). Prevents heat-shock induction of these operons. The sequence is that of Heat-inducible transcription repressor HrcA from Aster yellows witches'-broom phytoplasma (strain AYWB).